Reading from the N-terminus, the 322-residue chain is Undecaprenyl-phosphate 4-deoxy-4-formamido-L-arabinose transferase (322 aa).

Topologically, residues 1-235 are cytoplasmic; it reads MFEIHPVKKV…TCLTTTPLRM (235 aa). A helical membrane pass occupies residues 236–256; that stretch reads LSLLGSIIAIGGFSIAVLLVI. Residues 257 to 269 lie on the Periplasmic side of the membrane; sequence LRLTFGPQWAAEG. The helical transmembrane segment at 270-290 threads the bilayer; it reads VFMLFAVLFTFIGAQFIGMGL. Residues 291 to 322 lie on the Cytoplasmic side of the membrane; it reads LGEYIGRIYTDVRARPRYFVQQVIRPSSKENE.

Belongs to the glycosyltransferase 2 family.

The protein localises to the cell inner membrane. The enzyme catalyses UDP-4-deoxy-4-formamido-beta-L-arabinose + di-trans,octa-cis-undecaprenyl phosphate = 4-deoxy-4-formamido-alpha-L-arabinopyranosyl di-trans,octa-cis-undecaprenyl phosphate + UDP. Its pathway is glycolipid biosynthesis; 4-amino-4-deoxy-alpha-L-arabinose undecaprenyl phosphate biosynthesis; 4-amino-4-deoxy-alpha-L-arabinose undecaprenyl phosphate from UDP-4-deoxy-4-formamido-beta-L-arabinose and undecaprenyl phosphate: step 1/2. It functions in the pathway bacterial outer membrane biogenesis; lipopolysaccharide biosynthesis. In terms of biological role, catalyzes the transfer of 4-deoxy-4-formamido-L-arabinose from UDP to undecaprenyl phosphate. The modified arabinose is attached to lipid A and is required for resistance to polymyxin and cationic antimicrobial peptides. The chain is Undecaprenyl-phosphate 4-deoxy-4-formamido-L-arabinose transferase from Escherichia coli O157:H7 (strain EC4115 / EHEC).